Consider the following 206-residue polypeptide: LexA repressor (206 aa).

Positions 28 to 48 (RAEIATRLGFKSANAAEEHLK) form a DNA-binding region, H-T-H motif. Residues Ser123 and Lys160 each act as for autocatalytic cleavage activity in the active site.

It belongs to the peptidase S24 family. Homodimer.

It carries out the reaction Hydrolysis of Ala-|-Gly bond in repressor LexA.. Its function is as follows. Represses a number of genes involved in the response to DNA damage (SOS response), including recA and lexA. In the presence of single-stranded DNA, RecA interacts with LexA causing an autocatalytic cleavage which disrupts the DNA-binding part of LexA, leading to derepression of the SOS regulon and eventually DNA repair. The protein is LexA repressor of Shewanella oneidensis (strain ATCC 700550 / JCM 31522 / CIP 106686 / LMG 19005 / NCIMB 14063 / MR-1).